The following is a 252-amino-acid chain: Imidazole glycerol phosphate synthase subunit HisF (252 aa).

Residues Asp11 and Asp130 contribute to the active site.

This sequence belongs to the HisA/HisF family. Heterodimer of HisH and HisF.

It is found in the cytoplasm. It catalyses the reaction 5-[(5-phospho-1-deoxy-D-ribulos-1-ylimino)methylamino]-1-(5-phospho-beta-D-ribosyl)imidazole-4-carboxamide + L-glutamine = D-erythro-1-(imidazol-4-yl)glycerol 3-phosphate + 5-amino-1-(5-phospho-beta-D-ribosyl)imidazole-4-carboxamide + L-glutamate + H(+). It participates in amino-acid biosynthesis; L-histidine biosynthesis; L-histidine from 5-phospho-alpha-D-ribose 1-diphosphate: step 5/9. Functionally, IGPS catalyzes the conversion of PRFAR and glutamine to IGP, AICAR and glutamate. The HisF subunit catalyzes the cyclization activity that produces IGP and AICAR from PRFAR using the ammonia provided by the HisH subunit. This is Imidazole glycerol phosphate synthase subunit HisF from Staphylococcus epidermidis (strain ATCC 35984 / DSM 28319 / BCRC 17069 / CCUG 31568 / BM 3577 / RP62A).